Here is a 54-residue protein sequence, read N- to C-terminus: U7-myrmicitoxin-Tb1a (54 aa).

The signal sequence occupies residues 1-26 (MQLSHLLLAFAMIFVMTIIHTPQVQA). A propeptide spanning residues 27–36 (DAMADADADA) is cleaved from the precursor. C40 and C49 are joined by a disulfide.

As to expression, expressed by the venom gland.

Its subcellular location is the secreted. Venom protein with unknown function. Does not induce paralysis when a high dose is administered by intrathoracic injection into the blowfly Lucilia caesar. In Tetramorium bicarinatum (Tramp ant), this protein is U7-myrmicitoxin-Tb1a.